A 293-amino-acid polypeptide reads, in one-letter code: uncharacterized protein (293 aa).

Disordered regions lie at residues 121-154 (NLNF…SQNS) and 254-274 (DILQ…PQQQ). The segment covering 133–149 (SYHHHSHSHSHHSHSHS) has biased composition (basic residues). Pro residues predominate over residues 260-272 (PPSPTPTPPPPPQ).

This is an uncharacterized protein from Dictyostelium discoideum (Social amoeba).